Here is a 326-residue protein sequence, read N- to C-terminus: Thiamine thiazole synthase (326 aa).

Substrate is bound by residues Cys-87, 108–109 (EA), Gly-116, and Val-181. Cys-215 is subject to 2,3-didehydroalanine (Cys). Substrate is bound by residues Asp-217, His-232, Met-284, and 294 to 296 (RMG).

The protein belongs to the THI4 family. Homooctamer. The cofactor is Fe cation. During the catalytic reaction, a sulfide is transferred from Cys-215 to a reaction intermediate, generating a dehydroalanine residue.

The protein resides in the cytoplasm. It localises to the nucleus. The catalysed reaction is [ADP-thiazole synthase]-L-cysteine + glycine + NAD(+) = [ADP-thiazole synthase]-dehydroalanine + ADP-5-ethyl-4-methylthiazole-2-carboxylate + nicotinamide + 3 H2O + 2 H(+). Functionally, involved in biosynthesis of the thiamine precursor thiazole. Catalyzes the conversion of NAD and glycine to adenosine diphosphate 5-(2-hydroxyethyl)-4-methylthiazole-2-carboxylic acid (ADT), an adenylated thiazole intermediate. The reaction includes an iron-dependent sulfide transfer from a conserved cysteine residue of the protein to a thiazole intermediate. The enzyme can only undergo a single turnover, which suggests it is a suicide enzyme. May have additional roles in adaptation to various stress conditions and in DNA damage tolerance. This Sclerotinia sclerotiorum (strain ATCC 18683 / 1980 / Ss-1) (White mold) protein is Thiamine thiazole synthase.